A 477-amino-acid polypeptide reads, in one-letter code: Glutamyl-tRNA(Gln) amidotransferase subunit A (477 aa).

Residues Lys-76 and Ser-151 each act as charge relay system in the active site. The active-site Acyl-ester intermediate is the Ser-175.

This sequence belongs to the amidase family. GatA subfamily. Heterotrimer of A, B and C subunits.

It carries out the reaction L-glutamyl-tRNA(Gln) + L-glutamine + ATP + H2O = L-glutaminyl-tRNA(Gln) + L-glutamate + ADP + phosphate + H(+). Allows the formation of correctly charged Gln-tRNA(Gln) through the transamidation of misacylated Glu-tRNA(Gln) in organisms which lack glutaminyl-tRNA synthetase. The reaction takes place in the presence of glutamine and ATP through an activated gamma-phospho-Glu-tRNA(Gln). This chain is Glutamyl-tRNA(Gln) amidotransferase subunit A, found in Chlorobium phaeobacteroides (strain BS1).